A 360-amino-acid polypeptide reads, in one-letter code: 3-isopropylmalate dehydrogenase (360 aa).

An NAD(+)-binding site is contributed by 76–89 (GPKWDTIERDIRPE). Substrate-binding residues include arginine 96, arginine 106, arginine 134, and aspartate 224. Aspartate 224, aspartate 248, and aspartate 252 together coordinate Mg(2+). Position 282 to 294 (282 to 294 (GSAPDIAGKGIAN)) interacts with NAD(+).

It belongs to the isocitrate and isopropylmalate dehydrogenases family. LeuB type 1 subfamily. In terms of assembly, homodimer. It depends on Mg(2+) as a cofactor. Mn(2+) is required as a cofactor.

It is found in the cytoplasm. It carries out the reaction (2R,3S)-3-isopropylmalate + NAD(+) = 4-methyl-2-oxopentanoate + CO2 + NADH. Its pathway is amino-acid biosynthesis; L-leucine biosynthesis; L-leucine from 3-methyl-2-oxobutanoate: step 3/4. Catalyzes the oxidation of 3-carboxy-2-hydroxy-4-methylpentanoate (3-isopropylmalate) to 3-carboxy-4-methyl-2-oxopentanoate. The product decarboxylates to 4-methyl-2 oxopentanoate. In Pseudomonas fluorescens (strain Pf0-1), this protein is 3-isopropylmalate dehydrogenase.